The sequence spans 164 residues: Cyclic pyranopterin monophosphate synthase (164 aa).

Residues 75–77 (MCH) and 116–117 (ME) each bind substrate. The active site involves Asp-131.

Belongs to the MoaC family. As to quaternary structure, homohexamer; trimer of dimers.

It carries out the reaction (8S)-3',8-cyclo-7,8-dihydroguanosine 5'-triphosphate = cyclic pyranopterin phosphate + diphosphate. It participates in cofactor biosynthesis; molybdopterin biosynthesis. Its function is as follows. Catalyzes the conversion of (8S)-3',8-cyclo-7,8-dihydroguanosine 5'-triphosphate to cyclic pyranopterin monophosphate (cPMP). The chain is Cyclic pyranopterin monophosphate synthase from Staphylococcus aureus (strain bovine RF122 / ET3-1).